Here is a 52-residue protein sequence, read N- to C-terminus: Large ribosomal subunit protein bL33 (52 aa).

The protein belongs to the bacterial ribosomal protein bL33 family.

This is Large ribosomal subunit protein bL33 (rpmG) from Chlamydia pneumoniae (Chlamydophila pneumoniae).